The primary structure comprises 113 residues: MAGKGFGFSLGKMKELADAFKKAQQVQEGAKQVQEDLNNMEIEGQAQGGLVKVWVSGNQEPLRAEIAPEALNEGAEVLSELVAAAMKDAYQKSTAAMKEKMEALTAGLGIPGL.

It belongs to the YbaB/EbfC family. As to quaternary structure, homodimer.

The protein resides in the cytoplasm. It is found in the nucleoid. In terms of biological role, binds to DNA and alters its conformation. May be involved in regulation of gene expression, nucleoid organization and DNA protection. The protein is Nucleoid-associated protein Synpcc7942_0464 of Synechococcus elongatus (strain ATCC 33912 / PCC 7942 / FACHB-805) (Anacystis nidulans R2).